A 193-amino-acid polypeptide reads, in one-letter code: Auxin-induced protein 22D (193 aa).

The tract at residues 16–68 (ATELRLGLPGSDEPEKRATARSNKRSSPEASDEESISNGSDVTKEDNVVPPAK) is disordered. An EAR-like (transcriptional repression) motif is present at residues 19–23 (LRLGL). One can recognise a PB1 domain in the interval 97-184 (GMYVKVSMAG…SCKRLRIMKG (88 aa)).

It belongs to the Aux/IAA family. As to quaternary structure, homodimers and heterodimers.

The protein resides in the nucleus. Aux/IAA proteins are short-lived transcriptional factors that function as repressors of early auxin response genes at low auxin concentrations. Repression is thought to result from the interaction with auxin response factors (ARFs), proteins that bind to the auxin-responsive promoter element (AuxRE). Formation of heterodimers with ARF proteins may alter their ability to modulate early auxin response genes expression. The chain is Auxin-induced protein 22D (AUX22D) from Vigna radiata var. radiata (Mung bean).